The sequence spans 726 residues: Catalase-peroxidase (726 aa).

The tract at residues 1 to 33 (MSTTDDTHNTLSTGKCPFHQGGHDRSAGAGTAS) is disordered. The tryptophyl-tyrosyl-methioninium (Trp-Tyr) (with M-252) cross-link spans 105–226 (WHGAGTYRSI…LGATEMGLIY (122 aa)). Residue His106 is the Proton acceptor of the active site. The segment at residues 226–252 (YVNPEGPDHSGEPLSAAAAIRATFGNM) is a cross-link (tryptophyl-tyrosyl-methioninium (Tyr-Met) (with W-105)). His267 contacts heme b.

It belongs to the peroxidase family. Peroxidase/catalase subfamily. As to quaternary structure, homodimer or homotetramer. Requires heme b as cofactor. In terms of processing, formation of the three residue Trp-Tyr-Met cross-link is important for the catalase, but not the peroxidase activity of the enzyme.

The catalysed reaction is H2O2 + AH2 = A + 2 H2O. It carries out the reaction 2 H2O2 = O2 + 2 H2O. Its function is as follows. Bifunctional enzyme with both catalase and broad-spectrum peroxidase activity. This Salmonella schwarzengrund (strain CVM19633) protein is Catalase-peroxidase.